The chain runs to 471 residues: uncharacterized protein (471 aa).

Transmembrane regions (helical) follow at residues 10–30 (ALWLLDFLTFNISFLLSLFVI), 46–66 (IDDRTYIHAVLAGICVGWFAI), 87–107 (TLIIFAIFELAIVAFPKLYFS), and 280–300 (IVVGSLAIIIFSPVLLYLYFA).

The protein belongs to the bacterial sugar transferase family.

It localises to the cell membrane. The protein operates within glycan metabolism; exopolysaccharide biosynthesis. Functionally, may function as a sugar transferase. This is an uncharacterized protein from Haemophilus influenzae (strain ATCC 51907 / DSM 11121 / KW20 / Rd).